We begin with the raw amino-acid sequence, 31 residues long: Cytochrome b6-f complex subunit 6 (31 aa).

Residues 4–26 (ITSYFGFLLAALTITPALLISLN) traverse the membrane as a helical segment.

Belongs to the PetL family. The 4 large subunits of the cytochrome b6-f complex are cytochrome b6, subunit IV (17 kDa polypeptide, PetD), cytochrome f and the Rieske protein, while the 4 small subunits are PetG, PetL, PetM and PetN. The complex functions as a dimer.

It is found in the plastid. The protein resides in the chloroplast thylakoid membrane. Its function is as follows. Component of the cytochrome b6-f complex, which mediates electron transfer between photosystem II (PSII) and photosystem I (PSI), cyclic electron flow around PSI, and state transitions. PetL is important for photoautotrophic growth as well as for electron transfer efficiency and stability of the cytochrome b6-f complex. The sequence is that of Cytochrome b6-f complex subunit 6 from Dioscorea elephantipes (Elephant's foot yam).